The chain runs to 221 residues: Proteasome subunit beta type-1 (221 aa).

This sequence belongs to the peptidase T1B family. In terms of assembly, the 26S proteasome consists of a 20S proteasome core and two 19S regulatory subunits. The 20S proteasome core is composed of 28 subunits that are arranged in four stacked rings, resulting in a barrel-shaped structure. The two end rings are each formed by seven alpha subunits, and the two central rings are each formed by seven beta subunits. The catalytic chamber with the active sites is on the inside of the barrel.

It is found in the cytoplasm. It localises to the nucleus. Non-catalytic component of the proteasome, a multicatalytic proteinase complex which is characterized by its ability to cleave peptides with Arg, Phe, Tyr, Leu, and Glu adjacent to the leaving group at neutral or slightly basic pH. The proteasome has an ATP-dependent proteolytic activity. The polypeptide is Proteasome subunit beta type-1 (PBF1) (Oryza sativa subsp. japonica (Rice)).